The following is a 507-amino-acid chain: Pyridoxine 4-oxidase (507 aa).

H448 (proton acceptor) is an active-site residue.

It belongs to the GMC oxidoreductase family. As to quaternary structure, monomer. The cofactor is FAD.

It catalyses the reaction pyridoxine + O2 = pyridoxal + H2O2. The protein operates within cofactor degradation; B6 vitamer degradation; pyridoxal from pyridoxine (oxidase route): step 1/1. This Microbacterium luteolum (Aureobacterium luteolum) protein is Pyridoxine 4-oxidase (pno).